Here is a 296-residue protein sequence, read N- to C-terminus: POM121-like protein 12 (296 aa).

Disordered regions lie at residues 1–54 (MGAA…SPWP) and 142–162 (APPERQESPWRSPGQRARPAG). Residues 34–52 (SRSPSTPQTTPSPQGRQSP) show a composition bias toward low complexity.

This sequence belongs to the POM121 family.

The sequence is that of POM121-like protein 12 (POM121L12) from Homo sapiens (Human).